We begin with the raw amino-acid sequence, 312 residues long: Ribosomal RNA small subunit methyltransferase H (312 aa).

S-adenosyl-L-methionine-binding positions include Gly-35–His-37, Asp-55, Phe-79, Asp-101, and Gln-108. Residues Leu-286–Val-306 are disordered. Over residues Lys-287–Arg-298 the composition is skewed to basic and acidic residues.

It belongs to the methyltransferase superfamily. RsmH family.

Its subcellular location is the cytoplasm. It catalyses the reaction cytidine(1402) in 16S rRNA + S-adenosyl-L-methionine = N(4)-methylcytidine(1402) in 16S rRNA + S-adenosyl-L-homocysteine + H(+). In terms of biological role, specifically methylates the N4 position of cytidine in position 1402 (C1402) of 16S rRNA. In Aeromonas hydrophila subsp. hydrophila (strain ATCC 7966 / DSM 30187 / BCRC 13018 / CCUG 14551 / JCM 1027 / KCTC 2358 / NCIMB 9240 / NCTC 8049), this protein is Ribosomal RNA small subunit methyltransferase H.